Consider the following 514-residue polypeptide: ATP synthase subunit alpha (514 aa).

170-177 (GDRQTGKT) contributes to the ATP binding site.

This sequence belongs to the ATPase alpha/beta chains family. As to quaternary structure, F-type ATPases have 2 components, CF(1) - the catalytic core - and CF(0) - the membrane proton channel. CF(1) has five subunits: alpha(3), beta(3), gamma(1), delta(1), epsilon(1). CF(0) has three main subunits: a(1), b(2) and c(9-12). The alpha and beta chains form an alternating ring which encloses part of the gamma chain. CF(1) is attached to CF(0) by a central stalk formed by the gamma and epsilon chains, while a peripheral stalk is formed by the delta and b chains.

Its subcellular location is the cell inner membrane. It carries out the reaction ATP + H2O + 4 H(+)(in) = ADP + phosphate + 5 H(+)(out). Its function is as follows. Produces ATP from ADP in the presence of a proton gradient across the membrane. The alpha chain is a regulatory subunit. In Acinetobacter baumannii (strain AB307-0294), this protein is ATP synthase subunit alpha.